A 212-amino-acid chain; its full sequence is Ribosomal RNA large subunit methyltransferase E (212 aa).

Residues G56, W58, D78, D94, and D117 each contribute to the S-adenosyl-L-methionine site. Catalysis depends on K157, which acts as the Proton acceptor.

The protein belongs to the class I-like SAM-binding methyltransferase superfamily. RNA methyltransferase RlmE family.

Its subcellular location is the cytoplasm. The enzyme catalyses uridine(2552) in 23S rRNA + S-adenosyl-L-methionine = 2'-O-methyluridine(2552) in 23S rRNA + S-adenosyl-L-homocysteine + H(+). Its function is as follows. Specifically methylates the uridine in position 2552 of 23S rRNA at the 2'-O position of the ribose in the fully assembled 50S ribosomal subunit. The chain is Ribosomal RNA large subunit methyltransferase E from Ehrlichia chaffeensis (strain ATCC CRL-10679 / Arkansas).